A 606-amino-acid chain; its full sequence is R-linalool synthase, chloroplastic (606 aa).

A chloroplast-targeting transit peptide spans 1–51 (MCTIISVNHHHVAILSKPKVKLFHTKNKRSASINLPWSLSPSSSAASRPIS). 5 residues coordinate (2E)-geranyl diphosphate: R326, D363, D367, R504, and D507. Mg(2+)-binding residues include D363 and D367. Positions 363–367 (DDVYD) match the DDXXD motif motif. 3 residues coordinate Mg(2+): D507, T511, and E515.

It belongs to the terpene synthase family. Tpsb subfamily. Mg(2+) serves as cofactor. Mn(2+) is required as a cofactor.

The protein resides in the plastid. Its subcellular location is the chloroplast. It carries out the reaction (2E)-geranyl diphosphate + H2O = (R)-linalool + diphosphate. Its pathway is secondary metabolite biosynthesis; terpenoid biosynthesis. In terms of biological role, monoterpene synthase that catalyzes the formation of (3R)-linalool from geranyl diphosphate, but not from farnesyl diphosphate or geranylgeranyl diphosphate. The protein is R-linalool synthase, chloroplastic of Mentha aquatica (Water mint).